Reading from the N-terminus, the 271-residue chain is Formamidopyrimidine-DNA glycosylase (271 aa).

The active-site Schiff-base intermediate with DNA is the proline 2. Glutamate 3 functions as the Proton donor in the catalytic mechanism. Lysine 58 serves as the catalytic Proton donor; for beta-elimination activity. DNA is bound by residues histidine 92, arginine 111, and arginine 152. Residues 237–271 form an FPG-type zinc finger; sequence YVYGKVQKPCRICNNIITLIRQNGRSTYFCNACQN. Arginine 261 functions as the Proton donor; for delta-elimination activity in the catalytic mechanism.

Belongs to the FPG family. As to quaternary structure, monomer. Zn(2+) is required as a cofactor.

The enzyme catalyses Hydrolysis of DNA containing ring-opened 7-methylguanine residues, releasing 2,6-diamino-4-hydroxy-5-(N-methyl)formamidopyrimidine.. It catalyses the reaction 2'-deoxyribonucleotide-(2'-deoxyribose 5'-phosphate)-2'-deoxyribonucleotide-DNA = a 3'-end 2'-deoxyribonucleotide-(2,3-dehydro-2,3-deoxyribose 5'-phosphate)-DNA + a 5'-end 5'-phospho-2'-deoxyribonucleoside-DNA + H(+). Functionally, involved in base excision repair of DNA damaged by oxidation or by mutagenic agents. Acts as a DNA glycosylase that recognizes and removes damaged bases. Has a preference for oxidized purines, such as 7,8-dihydro-8-oxoguanine (8-oxoG). Has AP (apurinic/apyrimidinic) lyase activity and introduces nicks in the DNA strand. Cleaves the DNA backbone by beta-delta elimination to generate a single-strand break at the site of the removed base with both 3'- and 5'-phosphates. This chain is Formamidopyrimidine-DNA glycosylase, found in Wolbachia pipientis subsp. Culex pipiens (strain wPip).